We begin with the raw amino-acid sequence, 507 residues long: uncharacterized protein (507 aa).

3 disordered regions span residues 91–162, 174–255, and 309–422; these read NEKT…KKLL, EKLQ…QQQQ, and KRKL…NYST. Residues 116 to 143 show a composition bias toward acidic residues; it reads DSSESDSSESESDSSESESESESNETSE. Residues 144–155 are compositionally biased toward low complexity; that stretch reads NESSSSSEPESS. The segment covering 174 to 193 has biased composition (basic and acidic residues); the sequence is EKLQQEQQKQKEAQKPKEKP. Low complexity-rich tracts occupy residues 194–236, 243–255, and 313–350; these read QQQQ…QQIE, PQQQ…QQQQ, and QSQL…TNKP. Positions 351 to 360 are enriched in basic residues; that stretch reads LSKRQKKLLK. The span at 378 to 409 shows a compositional bias: low complexity; that stretch reads NNKNDNSTNDSNNNNDNNNNNKNDTNDSNNDD.

This is an uncharacterized protein from Dictyostelium discoideum (Social amoeba).